Consider the following 365-residue polypeptide: Zinc finger TRAF-type-containing protein 1-B (365 aa).

The disordered stretch occupies residues 1–56; sequence MSEEREAPGPLASSSAGLGAEVGQEEVPGGAGPARLLLLPSDSDGPPKKRLRSEAE. Residues 72–117 form an RING-type; degenerate zinc finger; that stretch reads CAVCLDLPKASVYQCTNGHLMCAGCFIHLLADARLKEEQATCPNCR. The TRAF-type zinc-finger motif lies at 113 to 186; that stretch reads CPNCRCEISK…PWQGPYHELT (74 aa).

This sequence belongs to the ZFTRAF1 family. Interacts with LGALS3.

Its subcellular location is the cytoplasm. This chain is Zinc finger TRAF-type-containing protein 1-B, found in Xenopus laevis (African clawed frog).